Consider the following 156-residue polypeptide: Small ribosomal subunit protein uS7 (156 aa).

This sequence belongs to the universal ribosomal protein uS7 family. In terms of assembly, part of the 30S ribosomal subunit. Contacts proteins S9 and S11.

In terms of biological role, one of the primary rRNA binding proteins, it binds directly to 16S rRNA where it nucleates assembly of the head domain of the 30S subunit. Is located at the subunit interface close to the decoding center, probably blocks exit of the E-site tRNA. This chain is Small ribosomal subunit protein uS7, found in Brachyspira hyodysenteriae (strain ATCC 49526 / WA1).